A 453-amino-acid chain; its full sequence is Pup--protein ligase (453 aa).

Residue glutamate 9 coordinates Mg(2+). Arginine 53 contacts ATP. Residue tyrosine 55 participates in Mg(2+) binding. The Proton acceptor role is filled by aspartate 57. Position 63 (glutamate 63) interacts with Mg(2+). The ATP site is built by threonine 66 and tryptophan 420.

Belongs to the Pup ligase/Pup deamidase family. Pup-conjugating enzyme subfamily.

It catalyses the reaction ATP + [prokaryotic ubiquitin-like protein]-L-glutamate + [protein]-L-lysine = ADP + phosphate + N(6)-([prokaryotic ubiquitin-like protein]-gamma-L-glutamyl)-[protein]-L-lysine.. The protein operates within protein degradation; proteasomal Pup-dependent pathway. Its pathway is protein modification; protein pupylation. Catalyzes the covalent attachment of the prokaryotic ubiquitin-like protein modifier Pup to the proteasomal substrate proteins, thereby targeting them for proteasomal degradation. This tagging system is termed pupylation. The ligation reaction involves the side-chain carboxylate of the C-terminal glutamate of Pup and the side-chain amino group of a substrate lysine. The chain is Pup--protein ligase from Kineococcus radiotolerans (strain ATCC BAA-149 / DSM 14245 / SRS30216).